The sequence spans 261 residues: 14-3-3-like protein B (261 aa).

The segment at 237–261 (DIPEDGEDSQKANGTAKFGGGDDAE) is disordered.

The protein belongs to the 14-3-3 family.

This Vicia faba (Broad bean) protein is 14-3-3-like protein B.